A 596-amino-acid polypeptide reads, in one-letter code: Leucine-rich repeat and IQ domain-containing protein 4 (596 aa).

LRR repeat units lie at residues 22–44, 59–83, 84–106, 108–129, 130–152, 153–176, 177–200, 202–223, 224–246, 248–269, 270–293, 295–315, 317–337, 338–361, 362–384, 385–407, 410–433, 434–457, 459–479, 480–502, 504–525, and 527–549; these read LPRL…LLRQ, LTDR…ILAL, KELE…IQQL, NTKV…LGAL, SSLE…VVSR, LRTL…ICKS, LHHL…IVNQ, KLRE…LCVL, YNLE…IGHL, RLQK…LSQC, SKLS…ELLT, LTEV…LCSW, SLHL…SFKR, LINL…ICAL, KNLE…ISLL, SNLK…IFSL, LEKL…IKRL, MNLK…GLMP, LEVL…ICRT, RNLR…LDHL, NLKV…VCNQ, and NEAI…TIQA. Residues 540 to 569 enclose the IQ domain; the sequence is RKMMATTIQAWWRGIMVRKGYGSYEELLKA. Residues 569–587 are compositionally biased toward basic residues; the sequence is ARKKGKSPPKDKKGKKAAK. The tract at residues 569-596 is disordered; it reads ARKKGKSPPKDKKGKKAAKGKPEKGNKK.

The polypeptide is Leucine-rich repeat and IQ domain-containing protein 4 (Lrriq4) (Mus musculus (Mouse)).